Here is a 678-residue protein sequence, read N- to C-terminus: ABC transporter F family member 2 (678 aa).

2 consecutive ABC transporter domains span residues 84–342 (VRLE…EAQY) and 411–626 (VTVK…AREL). Residues 116–123 (GVNGAGKT) and 443–450 (GPNGCGKS) each bind ATP. The segment at 630-678 (AELEEKAPKVKAKSKMSKAEREARKKQKMKAFQASKKKSKSSKNAKRWN) is disordered. Over residues 653-678 (RKKQKMKAFQASKKKSKSSKNAKRWN) the composition is skewed to basic residues.

Belongs to the ABC transporter superfamily. ABCF family. EF3 (TC 3.A.1.121) subfamily.

The polypeptide is ABC transporter F family member 2 (ABCF2) (Arabidopsis thaliana (Mouse-ear cress)).